The primary structure comprises 306 residues: tRNA pseudouridine synthase B (306 aa).

The active-site Nucleophile is the D47.

Belongs to the pseudouridine synthase TruB family. Type 1 subfamily.

It carries out the reaction uridine(55) in tRNA = pseudouridine(55) in tRNA. Responsible for synthesis of pseudouridine from uracil-55 in the psi GC loop of transfer RNAs. The chain is tRNA pseudouridine synthase B from Neisseria gonorrhoeae (strain ATCC 700825 / FA 1090).